Reading from the N-terminus, the 156-residue chain is E3 ubiquitin-protein ligase LAP (156 aa).

The segment at 1 to 55 (MSDICWICNDVCDERNNFCGCNEEYKVVHIKCMQLWINYSKKKECNLCKTKYNIK) adopts an RING-CH-type zinc-finger fold. Topologically, residues 1-73 (MSDICWICND…WNWCFNDKKT (73 aa)) are cytoplasmic. Residues Cys-5, Cys-8, Cys-19, Cys-21, His-29, Cys-32, Cys-45, and Cys-48 each coordinate Zn(2+). Residues 74-94 (TLFKIFFILFALVFIFLTITL) traverse the membrane as a helical segment. Residues 95–111 (SNDMANLVTGINDLICS) are Lumenal-facing. A helical transmembrane segment spans residues 112–132 (IIFLIVYTVVMLTSICFSVFV). Over 133–156 (VAIVVDFLLEAKEKNSFLTIREIV) the chain is Cytoplasmic.

This sequence belongs to the poxviridae LAP protein family.

Its subcellular location is the host membrane. It localises to the host Golgi apparatus. It is found in the host trans-Golgi network membrane. The protein resides in the host early endosome membrane. It carries out the reaction S-ubiquitinyl-[E2 ubiquitin-conjugating enzyme]-L-cysteine + [acceptor protein]-L-lysine = [E2 ubiquitin-conjugating enzyme]-L-cysteine + N(6)-ubiquitinyl-[acceptor protein]-L-lysine.. Functionally, E3 ubiquitin-protein ligase which promotes ubiquitination and subsequent degradation of host MHC-I and CD4 molecules, presumably to prevent lysis of infected cells by cytotoxic T-lymphocytes and NK cell. Binds target molecules through transmembrane interaction. The result of this ubiquitination is the enhancement of the endocytosis of the target chain and the delivery to the lysosome, where it is proteolytically destroyed. This chain is E3 ubiquitin-protein ligase LAP, found in Yaba-like disease virus (YLDV).